Here is a 149-residue protein sequence, read N- to C-terminus: 3-dehydroquinate dehydratase (149 aa).

The Proton acceptor role is filled by Y26. 3 residues coordinate substrate: N77, H83, and D90. H103 serves as the catalytic Proton donor. Residues 104 to 105 and R114 each bind substrate; that span reads LS.

Belongs to the type-II 3-dehydroquinase family. As to quaternary structure, homododecamer.

The enzyme catalyses 3-dehydroquinate = 3-dehydroshikimate + H2O. It functions in the pathway metabolic intermediate biosynthesis; chorismate biosynthesis; chorismate from D-erythrose 4-phosphate and phosphoenolpyruvate: step 3/7. Functionally, catalyzes a trans-dehydration via an enolate intermediate. The chain is 3-dehydroquinate dehydratase from Edwardsiella ictaluri (strain 93-146).